The primary structure comprises 241 residues: Pyridoxal phosphate phosphatase PHOSPHO2 (241 aa).

Asp8 serves as the catalytic Nucleophile. 2 residues coordinate Mg(2+): Asp8 and Asp10. Catalysis depends on Asp10, which acts as the Proton donor. Residues Asp19 and Asp99 each coordinate substrate. Asp179 provides a ligand contact to Mg(2+).

Belongs to the HAD-like hydrolase superfamily. PHOSPHO family. It depends on Mg(2+) as a cofactor.

It carries out the reaction pyridoxal 5'-phosphate + H2O = pyridoxal + phosphate. In terms of biological role, phosphatase that has high activity toward pyridoxal 5'-phosphate (PLP). Also active at much lower level toward pyrophosphate, phosphoethanolamine (PEA), phosphocholine (PCho), phospho-l-tyrosine, fructose-6-phosphate, p-nitrophenyl phosphate, and h-glycerophosphate. The protein is Pyridoxal phosphate phosphatase PHOSPHO2 (PHOSPHO2) of Homo sapiens (Human).